We begin with the raw amino-acid sequence, 417 residues long: Probable glucuronosyltransferase Os01g0926700 (417 aa).

The Cytoplasmic portion of the chain corresponds to 1–3 (MRR). Residues 4–24 (WVLAIAILAAAVCFFLGAQAQ) traverse the membrane as a helical; Signal-anchor for type II membrane protein segment. Over 25–417 (EVRQGHQTER…AGPVGDLKPW (393 aa)) the chain is Lumenal. Asparagine 144 and asparagine 405 each carry an N-linked (GlcNAc...) asparagine glycan.

This sequence belongs to the glycosyltransferase 47 family.

It localises to the golgi apparatus membrane. Involved in the synthesis of glucuronoxylan hemicellulose in secondary cell walls. This Oryza sativa subsp. japonica (Rice) protein is Probable glucuronosyltransferase Os01g0926700.